Consider the following 1782-residue polypeptide: MAQQQQQQHQQQQHHQQQQQLLLQQQQQLLQYNNNLYNLNYNMEDNERRKRREREKYERQQGIQSDDRETSLFGEPRRLNPSEGDAEITAALGEFIDARDHMNSSTVGIYRHASTNASSSRLPALSFGGSSLANSYSTSSASVNPAASLASSSASVPGQLPTSQQQQQQQQQQQHYQQQQRAPTYLKQADNKPPYNGRGGYPGQPMKNDIPSSSGMAPPRGPPRSSSSASQSNSNSNSINSSSATNNATSGATSASMSSPLGPPLSTQMPNGREKSFLGPPAPALPNGGRFVPPAASSKRPSNSVGLQPPPPEKDISKIITEMTNNYRVTPLTSIAATPHAPMSENYNLNGPNKFKYAFDSIGPLNSPPAAGASSLMTPLLAPIAPITSPIAPLLTTPPQASQLPLPLAPLAGATTVPPALGGMAAVAPIQQLMPTPPKASPTPPAIKPMKTEKNHSLEKQDSCLENDLELSESDDERKKEGRSAGNSSNSSESDSSESGSEASSKGDTQQQQQQQQQQQQQQLLLQQQQQQQLLLQQQQQRLAASANGSKKKYSQTIIASGANTISGLLTSSGLGGAGAGSVAGGAGGAGGAINATNNTCGGGGGSSGSCMGTMSSSSSSNKTPSPTDSNRWNLSRFFPKPANQTAAESVSPGVANAIGNVSMKVPGILPGGAQIIPESIDVTTAIVKNEKLHDEPRHVGDDEDDEADEQHRQQQQQQQQQQQQQQQQQRYGLSVTVKKEQLEQQQQQQLLLQQQQQLTTEQLALAGALPKNQIKRESRLSDSGSASSGSGSGSSSSDSAGGSSEVLQMPGPGETLQIPGVPAAITTVLRVPQAMQHKVQPNSVTLTPIGPLPASPKPRQKKPRKKKMSAATAPLDSSDEDEPTASSNKKHALELAATAAAAAAAVAVPVAAAAAPAIKKGRGRPRKQAQQQQQQQQQQLQQSGNLSSASASSSQAKGPTLTAAKKPLAKASVSNSNSTAPATVAAGTRKREHSSNSSSNSNTPTKKPTATFATMAAKLDRADALSSDDDSSSSSSCSSTKSSSSSGSDSETPAAAAAGAAASTATTVVTTSAQNPAKKRIVKINKVGVAGNSSSSSKAKRRYSVGSSSNSSSSSETEEQQQHKQQQLLLLQQQQQKQQLQHQQQLQQQQQQQQSLLGQFAAESLPQSAQRLSSSDCSSSSNSDSSSNSSGSSSSSDEDGEHRSGKRKSDKKKICTLTRIFNPKEGGAKKQGQVVIIDQSEEQQQQQQQQQQQAKELKPRATPTQLLGATLASPARTTTPHLTSLMCKIDLSKLARQHHHQPERLKAQQNGHLSSRSAEGARTPKDLQQICTPNGYVGGAAGGGAAASKLLGGVKHEHGVKPEPELEPGYEGKYKLNSVKQEFMLKQELPARRRKRSSSSSSSPYKEKKRKKEKAEQLSKELLPVPVLLPANNHERLSRDKLELLMQQQESAANGSPNKLQQQQQQSRLSQSQQQQQQQQQQQSLSQSTTAAATVAAAPIQLPTTCSEAVQTTPPPAAPQPEPRLIYRSHFDKEEENENDDLRKNDFLLQEAIRRKRAADSERDSFSQMTLYLEAIVYFLLTADAMERCNMEATWTMYKDTLSLIKYISSKNRPYQLSTNGNHESHNIVAILSLRCQSLISLKLYKLRRVNCRAIIASCTEFFRSGRGDILNGNTPSSISPSNSVGSQGSGSNTPPGKIVPQDIHNMLCKQNEYLTYVNSAHELWDQADRLVRNGNHIDFIRKLDHENGPLTLHSTMHEVFRYVQAGLKTLRDAVSYPQSQ.

Disordered regions lie at residues 42–84 (NMED…PSEG), 150–313 (ASSS…PPPE), 434–515 (MPTP…QQQQ), 605–637 (GGSSGSCMGTMSSSSSSNKTPSPTDSNRWNLSR), 691–732 (EKLH…QQRY), 768–820 (GALP…LQIP), 839–891 (KVQP…SNKK), 911–1064 (VAAA…AAAS), 1091–1126 (AGNSSSSSKAKRRYSVGSSSNSSSSSETEEQQQHKQ), 1166–1234 (LPQS…KQGQ), 1296–1327 (ARQHHHQPERLKAQQNGHLSSRSAEGARTPKD), 1386–1420 (LKQELPARRRKRSSSSSSSPYKEKKRKKEKAEQLS), 1450–1484 (QESAANGSPNKLQQQQQQSRLSQSQQQQQQQQQQQ), and 1674–1701 (GNTPSSISPSNSVGSQGSGSNTPPGKIV). Over residues 54–80 (REKYERQQGIQSDDRETSLFGEPRRLN) the composition is skewed to basic and acidic residues. 2 stretches are compositionally biased toward low complexity: residues 164–180 (QQQQQQQQQQQHYQQQQ) and 211–260 (PSSS…MSSP). The span at 435–447 (PTPPKASPTPPAI) shows a compositional bias: pro residues. Position 443 is a phosphothreonine (Thr443). A compositionally biased stretch (basic and acidic residues) spans 450–463 (MKTEKNHSLEKQDS). Residues 465-475 (LENDLELSESD) are compositionally biased toward acidic residues. Residues Ser472 and Ser474 each carry the phosphoserine modification. 2 stretches are compositionally biased toward low complexity: residues 484–515 (SAGNSSNSSESDSSESGSEASSKGDTQQQQQQ) and 609–622 (GSCMGTMSSSSSSN). Residues 623-634 (KTPSPTDSNRWN) show a composition bias toward polar residues. Residues 691–701 (EKLHDEPRHVG) show a composition bias toward basic and acidic residues. 2 stretches are compositionally biased toward low complexity: residues 714–730 (QQQQQQQQQQQQQQQQQ) and 782–805 (SDSGSASSGSGSGSSSSDSAGGSS). Positions 859 to 869 (PRQKKPRKKKM) are enriched in basic residues. 2 positions are modified to phosphoserine: Ser878 and Ser879. The segment at residues 920–932 (KKGRGRPRKQAQQ) is a DNA-binding region (a.T hook). The segment covering 929–972 (QAQQQQQQQQQQLQQSGNLSSASASSSQAKGPTLTAAKKPLAKA) has biased composition (low complexity). Phosphoserine occurs at positions 949 and 951. Residues 973–982 (SVSNSNSTAP) show a composition bias toward polar residues. Low complexity-rich tracts occupy residues 996–1018 (SNSSSNSNTPTKKPTATFATMAA), 1033–1064 (SSSSSCSSTKSSSSSGSDSETPAAAAAGAAAS), 1105–1116 (SVGSSSNSSSSS), and 1174–1196 (SSSDCSSSSNSDSSSNSSGSSSS). Polar residues predominate over residues 1308 to 1318 (AQQNGHLSSRS). The span at 1450-1460 (QESAANGSPNK) shows a compositional bias: polar residues. Residue Ser1457 is modified to Phosphoserine. 2 stretches are compositionally biased toward low complexity: residues 1461–1484 (LQQQQQQSRLSQSQQQQQQQQQQQ) and 1674–1694 (GNTPSSISPSNSVGSQGSGSN).

This sequence belongs to the AF4 family.

It localises to the nucleus. In terms of biological role, has a role in transcriptional regulation. Acts in parallel with the Ras/MAPK and the PI3K/PKB pathways in the control of cell identity and cellular growth. Essential for regulation of the cytoskeleton and cell growth but not for cell proliferation or growth rate. Required specifically for the microtubule-based basal transport of lipid droplets. Plays a partially redundant function downstream of Raf in cell fate specification in the developing eye. Pair-rule protein that regulates embryonic cellularization, gastrulation and segmentation. This Drosophila mojavensis (Fruit fly) protein is AF4/FMR2 family member lilli.